The following is a 348-amino-acid chain: Dihydroorotase (348 aa).

Positions 17 and 19 each coordinate Zn(2+). Residues 19–21 and Asn45 each bind substrate; that span reads HLR. The Zn(2+) site is built by Lys103, His140, and His178. The residue at position 103 (Lys103) is an N6-carboxylysine. Position 140 (His140) interacts with substrate. Residue Leu223 coordinates substrate. Residue Asp251 participates in Zn(2+) binding. Asp251 is a catalytic residue. Substrate contacts are provided by His255 and Ala267.

This sequence belongs to the metallo-dependent hydrolases superfamily. DHOase family. Class II DHOase subfamily. As to quaternary structure, homodimer. Zn(2+) serves as cofactor.

The catalysed reaction is (S)-dihydroorotate + H2O = N-carbamoyl-L-aspartate + H(+). It functions in the pathway pyrimidine metabolism; UMP biosynthesis via de novo pathway; (S)-dihydroorotate from bicarbonate: step 3/3. Catalyzes the reversible cyclization of carbamoyl aspartate to dihydroorotate. This chain is Dihydroorotase, found in Shigella dysenteriae serotype 1 (strain Sd197).